A 514-amino-acid chain; its full sequence is Bifunctional purine biosynthesis protein PurH (514 aa).

The 142-residue stretch at 1–142 folds into the MGS-like domain; it reads MLALLSVSDK…KNFRHVSVVV (142 aa).

The protein belongs to the PurH family.

The catalysed reaction is (6R)-10-formyltetrahydrofolate + 5-amino-1-(5-phospho-beta-D-ribosyl)imidazole-4-carboxamide = 5-formamido-1-(5-phospho-D-ribosyl)imidazole-4-carboxamide + (6S)-5,6,7,8-tetrahydrofolate. The enzyme catalyses IMP + H2O = 5-formamido-1-(5-phospho-D-ribosyl)imidazole-4-carboxamide. The protein operates within purine metabolism; IMP biosynthesis via de novo pathway; 5-formamido-1-(5-phospho-D-ribosyl)imidazole-4-carboxamide from 5-amino-1-(5-phospho-D-ribosyl)imidazole-4-carboxamide (10-formyl THF route): step 1/1. Its pathway is purine metabolism; IMP biosynthesis via de novo pathway; IMP from 5-formamido-1-(5-phospho-D-ribosyl)imidazole-4-carboxamide: step 1/1. The protein is Bifunctional purine biosynthesis protein PurH of Myxococcus xanthus (strain DK1622).